A 524-amino-acid chain; its full sequence is Putative ribose/galactose/methyl galactoside import ATP-binding protein 1 (524 aa).

ABC transporter domains follow at residues 29–270 and 280–524; these read LEMR…VGRT and VPIG…TGGH. 61 to 68 provides a ligand contact to ATP; it reads GENGAGKS.

This sequence belongs to the ABC transporter superfamily. Carbohydrate importer 2 (CUT2) (TC 3.A.1.2) family.

It is found in the cell inner membrane. It carries out the reaction D-ribose(out) + ATP + H2O = D-ribose(in) + ADP + phosphate + H(+). The catalysed reaction is D-galactose(out) + ATP + H2O = D-galactose(in) + ADP + phosphate + H(+). In terms of biological role, part of an ABC transporter complex involved in carbohydrate import. Could be involved in ribose, galactose and/or methyl galactoside import. Responsible for energy coupling to the transport system. This Rhizobium etli (strain ATCC 51251 / DSM 11541 / JCM 21823 / NBRC 15573 / CFN 42) protein is Putative ribose/galactose/methyl galactoside import ATP-binding protein 1.